The chain runs to 100 residues: NADH-quinone oxidoreductase subunit K (100 aa).

3 helical membrane passes run Val-2–Val-22, Leu-28–Ala-48, and Phe-63–Trp-83.

The protein belongs to the complex I subunit 4L family. NDH-1 is composed of 14 different subunits. Subunits NuoA, H, J, K, L, M, N constitute the membrane sector of the complex.

Its subcellular location is the cell inner membrane. The enzyme catalyses a quinone + NADH + 5 H(+)(in) = a quinol + NAD(+) + 4 H(+)(out). In terms of biological role, NDH-1 shuttles electrons from NADH, via FMN and iron-sulfur (Fe-S) centers, to quinones in the respiratory chain. The immediate electron acceptor for the enzyme in this species is believed to be ubiquinone. Couples the redox reaction to proton translocation (for every two electrons transferred, four hydrogen ions are translocated across the cytoplasmic membrane), and thus conserves the redox energy in a proton gradient. This is NADH-quinone oxidoreductase subunit K from Wolinella succinogenes (strain ATCC 29543 / DSM 1740 / CCUG 13145 / JCM 31913 / LMG 7466 / NCTC 11488 / FDC 602W) (Vibrio succinogenes).